The following is a 293-amino-acid chain: Triosephosphate isomerase (293 aa).

Residue Asn-25–Lys-27 coordinates substrate. His-117 (electrophile) is an active-site residue. The active-site Proton acceptor is Glu-218.

The protein belongs to the triosephosphate isomerase family. In terms of assembly, homodimer.

It is found in the cytoplasm. The enzyme catalyses D-glyceraldehyde 3-phosphate = dihydroxyacetone phosphate. It functions in the pathway carbohydrate biosynthesis; gluconeogenesis. Its pathway is carbohydrate degradation; glycolysis; D-glyceraldehyde 3-phosphate from glycerone phosphate: step 1/1. Functionally, involved in the gluconeogenesis. Catalyzes stereospecifically the conversion of dihydroxyacetone phosphate (DHAP) to D-glyceraldehyde-3-phosphate (G3P). The chain is Triosephosphate isomerase from Tropheryma whipplei (strain Twist) (Whipple's bacillus).